The chain runs to 92 residues: Probable Fe(2+)-trafficking protein (92 aa).

It belongs to the Fe(2+)-trafficking protein family.

Its function is as follows. Could be a mediator in iron transactions between iron acquisition and iron-requiring processes, such as synthesis and/or repair of Fe-S clusters in biosynthetic enzymes. In Shewanella halifaxensis (strain HAW-EB4), this protein is Probable Fe(2+)-trafficking protein.